Here is a 475-residue protein sequence, read N- to C-terminus: Zinc-regulated GTPase metalloprotein activator 1 (475 aa).

GTP is bound at residue 50-57 (GFLGSGKT). Residues cysteine 116, cysteine 118, and cysteine 119 each contribute to the Zn(2+) site. The short motif at 116-119 (CICC) is the CXCC motif element. GTP contacts are provided by residues 119 to 123 (CTMRE) and 229 to 232 (NKCD). Residues 302 to 420 (IKSFIYKARR…LIESELNNCL (119 aa)) enclose the CobW C-terminal domain. The stretch at 440-467 (IQLDEELEEEELEEEEEEGEYKDEIEMK) forms a coiled coil. The segment covering 445–460 (ELEEEELEEEEEEGEY) has biased composition (acidic residues). Positions 445–475 (ELEEEELEEEEEEGEYKDEIEMKVDGSKFKK) are disordered. Residues 461–475 (KDEIEMKVDGSKFKK) show a composition bias toward basic and acidic residues.

Belongs to the SIMIBI class G3E GTPase family. ZNG1 subfamily.

The enzyme catalyses GTP + H2O = GDP + phosphate + H(+). Zinc chaperone that directly transfers zinc cofactor to target metalloproteins, thereby activating them. Zinc is transferred from the CXCC motif in the GTPase domain to the zinc binding site in target proteins in a process requiring GTP hydrolysis. This is Zinc-regulated GTPase metalloprotein activator 1 from Dictyostelium discoideum (Social amoeba).